The following is a 20-amino-acid chain: Antifreeze protein (20 aa).

Post-translationally, N-glycosylated and O-glycosylated.

It is found in the secreted. It localises to the extracellular space. Antifreeze proteins bind to the surface of ice crystals and inhibit the growth of these crystals, this inhibition causes thermal hysteresis. Causes the shape of ice crystals to change from hexagonal to a bipyramidal shape with rugged facets. Inhibits recrystallization of ice crystals. In Antarctomyces psychrotrophicus, this protein is Antifreeze protein.